Consider the following 227-residue polypeptide: Testis expressed protein 56 (227 aa).

As to expression, expressed predominantly in the testis.

In Mus musculus (Mouse), this protein is Testis expressed protein 56.